A 237-amino-acid chain; its full sequence is Thrombin-like enzyme agkihpin-1 (237 aa).

A propeptide is located at residue Met1. The Peptidase S1 domain maps to 2–228; it reads ILGDDECNIN…HLDWIENIIA (227 aa). Cys27 and Cys43 are oxidised to a cystine. Catalysis depends on His42, which acts as the Charge relay system. Asn80 carries an N-linked (GlcNAc...) asparagine glycan. Residue Asp87 is the Charge relay system of the active site. 3 disulfides stabilise this stretch: Cys119-Cys189, Cys151-Cys168, and Cys179-Cys204. The Charge relay system role is filled by Ser183.

Belongs to the peptidase S1 family. Snake venom subfamily. As to expression, expressed by the venom gland.

The protein resides in the secreted. Its activity is regulated as follows. The hydrolysis of TAMe (tosyl-arginine methyl ester) substrate is activated by Ca(2+), Fe(3+), Mg(2+) and Zn(2+), and inhibited by EDTA, PMSF and DTT. Its function is as follows. Thrombin-like enzyme that shows fibrinogenolytic activity against bovine fibrinogen alpha and beta chains, but not gamma chain. Hydrolyzes fibrin. Enhances ADP-induced human platelet aggregation. Has arginine esterase activity for TAMe (tosyl-arginine methyl ester) substrate. Reduces thrombin-induced thrombosis. Does not have hemorrhagic activity. Reduces the motility of human liver cancer HepG2 cells in a wound-healing assay. The protein is Thrombin-like enzyme agkihpin-1 of Gloydius halys (Chinese water mocassin).